We begin with the raw amino-acid sequence, 114 residues long: Protein LLP homolog (114 aa).

Composition is skewed to basic residues over residues 1–21 (MAKS…RKKN) and 91–108 (QRKK…KSKL). Disordered stretches follow at residues 1-23 (MAKS…KNAP) and 91-114 (QRKK…GLAW).

Belongs to the learning-associated protein family.

It is found in the nucleus. It localises to the nucleolus. The protein resides in the chromosome. Its function is as follows. Regulates dendritic and spine growth and synaptic transmission. The chain is Protein LLP homolog (LLPH) from Gallus gallus (Chicken).